Reading from the N-terminus, the 163-residue chain is Large ribosomal subunit protein uL15 (163 aa).

Residues 1–43 (MKLNEIADNEGSRKKRTRVGRGIGSGKGKQSGRGGKGQTARSG) form a disordered region. The segment covering 21–37 (RGIGSGKGKQSGRGGKG) has biased composition (gly residues).

It belongs to the universal ribosomal protein uL15 family. Part of the 50S ribosomal subunit.

In terms of biological role, binds to the 23S rRNA. In Afipia carboxidovorans (strain ATCC 49405 / DSM 1227 / KCTC 32145 / OM5) (Oligotropha carboxidovorans), this protein is Large ribosomal subunit protein uL15.